The primary structure comprises 372 residues: Cytochrome b (372 aa).

Helical transmembrane passes span 25–45 (FGSMLLTCLMLQITTGFFLAI), 69–90 (WIMQNLHAISASMFFICIYIHI), 105–125 (WLSGTALLITLMATAFFGYVL), and 170–190 (FFALHFILPFAIMALSSIHII). 2 residues coordinate heme b: histidine 75 and histidine 89. Heme b-binding residues include histidine 174 and histidine 188. Histidine 193 serves as a coordination point for a ubiquinone. A run of 4 helical transmembrane segments spans residues 218–238 (YKDMLMFTSMITLLFITLSFS), 280–300 (LGGALALLMSVMILTTVPFTH), 312–332 (LSQILFWTLMATFITITWTAS), and 339–358 (FISISQTTSIFYFSFFITIP).

It belongs to the cytochrome b family. As to quaternary structure, the cytochrome bc1 complex contains 3 respiratory subunits (MT-CYB, CYC1 and UQCRFS1), 2 core proteins (UQCRC1 and UQCRC2) and probably 6 low-molecular weight proteins. The cofactor is heme b.

The protein resides in the mitochondrion inner membrane. In terms of biological role, component of the ubiquinol-cytochrome c reductase complex (complex III or cytochrome b-c1 complex) that is part of the mitochondrial respiratory chain. The b-c1 complex mediates electron transfer from ubiquinol to cytochrome c. Contributes to the generation of a proton gradient across the mitochondrial membrane that is then used for ATP synthesis. This chain is Cytochrome b (MT-CYB), found in Naja annulata annulata (Banded water cobra).